The chain runs to 188 residues: Elongation factor P-like protein (188 aa).

It belongs to the elongation factor P family.

This chain is Elongation factor P-like protein, found in Xanthomonas oryzae pv. oryzae (strain MAFF 311018).